An 89-amino-acid polypeptide reads, in one-letter code: Small ribosomal subunit protein uS15 (89 aa).

Positions 1-21 are enriched in basic and acidic residues; the sequence is MSLHQERKSELVSKFRTHESD. Residues 1 to 25 form a disordered region; the sequence is MSLHQERKSELVSKFRTHESDTGSP.

It belongs to the universal ribosomal protein uS15 family. In terms of assembly, part of the 30S ribosomal subunit. Forms a bridge to the 50S subunit in the 70S ribosome, contacting the 23S rRNA.

One of the primary rRNA binding proteins, it binds directly to 16S rRNA where it helps nucleate assembly of the platform of the 30S subunit by binding and bridging several RNA helices of the 16S rRNA. Functionally, forms an intersubunit bridge (bridge B4) with the 23S rRNA of the 50S subunit in the ribosome. The chain is Small ribosomal subunit protein uS15 from Myxococcus xanthus (strain DK1622).